The primary structure comprises 409 residues: MKSATIIGGGSHPELLHLISNRLGITPCDVSLKRFANGETSVEIRESVRDKDVFILQSGSSTVNDSLMELLIIISACKGGSAKRITAVMPYFPYSKQSKMRKYRDAITARMVANLLTVAGVDHIITLDLHASQMQGFFTRPVDNLYAEPNIAEWIRRNVDDWEEAVVVSKNPGGAKRVTSLADTLNLDFALINTDRQRSSHFSQNFEDSIMDETEATETHVTNCSVYLDRPRIHTAKYLLGHIIDDEEIITTPASVCSEDYAQEVNLYSQGGCPSDDDEEENIMSASIYAERMITLVGDVNGKTALLIDDTIENPTAFIVASEHLVKRCGAKRVIVIGTHGIFQNKCLKDLQSCEYIEQIVVTNTYPIKPQAVLECDKLTVIDISGVLAEAIRRTHNGESISFLFKKAF.

Mg(2+) is bound by residues Asp-128, His-130, and Asp-143. Phosphoserine is present on Ser-199.

Belongs to the ribose-phosphate pyrophosphokinase family.

The protein localises to the cytoplasm. It catalyses the reaction D-ribose 5-phosphate + ATP = 5-phospho-alpha-D-ribose 1-diphosphate + AMP + H(+). Its pathway is metabolic intermediate biosynthesis; 5-phospho-alpha-D-ribose 1-diphosphate biosynthesis; 5-phospho-alpha-D-ribose 1-diphosphate from D-ribose 5-phosphate (route I): step 1/1. In terms of biological role, 5-phosphoribose 1-diphosphate synthase involved in nucleotide, histidine, and tryptophan biosynthesis. Active in heteromultimeric complexes with other 5-phosphoribose 1-diphosphate synthases. The protein is Ribose-phosphate pyrophosphokinase 1 of Schizosaccharomyces pombe (strain 972 / ATCC 24843) (Fission yeast).